A 549-amino-acid chain; its full sequence is Hydroxylamine reductase (549 aa).

Residues C3, C6, C18, and C25 each coordinate [2Fe-2S] cluster. 8 residues coordinate hybrid [4Fe-2O-2S] cluster: H248, E272, C316, C404, C432, C457, E491, and K493. Position 404 is a cysteine persulfide (C404).

This sequence belongs to the HCP family. [2Fe-2S] cluster is required as a cofactor. Requires hybrid [4Fe-2O-2S] cluster as cofactor.

The protein localises to the cytoplasm. It carries out the reaction A + NH4(+) + H2O = hydroxylamine + AH2 + H(+). Functionally, catalyzes the reduction of hydroxylamine to form NH(3) and H(2)O. This is Hydroxylamine reductase from Aeromonas hydrophila subsp. hydrophila (strain ATCC 7966 / DSM 30187 / BCRC 13018 / CCUG 14551 / JCM 1027 / KCTC 2358 / NCIMB 9240 / NCTC 8049).